A 303-amino-acid polypeptide reads, in one-letter code: Aspartate carbamoyltransferase catalytic subunit (303 aa).

2 residues coordinate carbamoyl phosphate: Arg48 and Thr49. Position 76 (Lys76) interacts with L-aspartate. Carbamoyl phosphate-binding residues include Arg98, His129, and Gln132. L-aspartate-binding residues include Arg162 and Arg214. Residues Ala257 and Pro258 each contribute to the carbamoyl phosphate site.

It belongs to the aspartate/ornithine carbamoyltransferase superfamily. ATCase family. As to quaternary structure, heterododecamer (2C3:3R2) of six catalytic PyrB chains organized as two trimers (C3), and six regulatory PyrI chains organized as three dimers (R2).

The catalysed reaction is carbamoyl phosphate + L-aspartate = N-carbamoyl-L-aspartate + phosphate + H(+). Its pathway is pyrimidine metabolism; UMP biosynthesis via de novo pathway; (S)-dihydroorotate from bicarbonate: step 2/3. Its function is as follows. Catalyzes the condensation of carbamoyl phosphate and aspartate to form carbamoyl aspartate and inorganic phosphate, the committed step in the de novo pyrimidine nucleotide biosynthesis pathway. The chain is Aspartate carbamoyltransferase catalytic subunit from Leuconostoc citreum (strain KM20).